Here is a 276-residue protein sequence, read N- to C-terminus: Bis(5'-nucleosyl)-tetraphosphatase, symmetrical (276 aa).

The protein belongs to the Ap4A hydrolase family.

The catalysed reaction is P(1),P(4)-bis(5'-adenosyl) tetraphosphate + H2O = 2 ADP + 2 H(+). In terms of biological role, hydrolyzes diadenosine 5',5'''-P1,P4-tetraphosphate to yield ADP. This Legionella pneumophila (strain Corby) protein is Bis(5'-nucleosyl)-tetraphosphatase, symmetrical.